The following is a 91-amino-acid chain: Large ribosomal subunit protein eL34 (91 aa).

Residues 48–69 form a disordered region; that stretch reads RGRPVEMRKLPKTKKRPERPMP.

This sequence belongs to the eukaryotic ribosomal protein eL34 family.

The sequence is that of Large ribosomal subunit protein eL34 (rpl34e) from Pyrococcus horikoshii (strain ATCC 700860 / DSM 12428 / JCM 9974 / NBRC 100139 / OT-3).